The sequence spans 163 residues: Phosphopantetheine adenylyltransferase (163 aa).

Ser-10 is a substrate binding site. ATP contacts are provided by residues 10 to 11 (SF) and His-18. Substrate-binding residues include Lys-42, Leu-74, and Arg-88. ATP-binding positions include 89–91 (GLR), Glu-99, and 124–130 (YSFLSSS).

Belongs to the bacterial CoaD family. Homohexamer. Requires Mg(2+) as cofactor.

It is found in the cytoplasm. The enzyme catalyses (R)-4'-phosphopantetheine + ATP + H(+) = 3'-dephospho-CoA + diphosphate. It functions in the pathway cofactor biosynthesis; coenzyme A biosynthesis; CoA from (R)-pantothenate: step 4/5. Functionally, reversibly transfers an adenylyl group from ATP to 4'-phosphopantetheine, yielding dephospho-CoA (dPCoA) and pyrophosphate. This is Phosphopantetheine adenylyltransferase from Bacillus cereus (strain G9842).